Reading from the N-terminus, the 234-residue chain is Peptidase E (234 aa).

Active-site charge relay system residues include S123, D138, and H160.

It belongs to the peptidase S51 family.

The protein localises to the cytoplasm. It catalyses the reaction Dipeptidase E catalyzes the hydrolysis of dipeptides Asp-|-Xaa. It does not act on peptides with N-terminal Glu, Asn or Gln, nor does it cleave isoaspartyl peptides.. Hydrolyzes dipeptides containing N-terminal aspartate residues. May play a role in allowing the cell to use peptide aspartate to spare carbon otherwise required for the synthesis of the aspartate family of amino acids. This Haemophilus influenzae (strain PittGG) protein is Peptidase E.